Consider the following 1010-residue polypeptide: Ubiquitin conjugation factor E4 (1010 aa).

The segment at 13–70 (AKLQQTNSEANSSKEPKESNIAPEPKKPDLKKRFIGSKATTSNSEQKEISPPVTSGAP) is disordered. A compositionally biased stretch (basic and acidic residues) spans 24 to 44 (SSKEPKESNIAPEPKKPDLKK). The 75-residue stretch at 930–1004 (DIPDYFLDPL…NTFLKSKRNK (75 aa)) folds into the U-box domain.

It belongs to the ubiquitin conjugation factor E4 family.

It localises to the cytoplasm. Its subcellular location is the nucleus. It functions in the pathway protein modification; protein ubiquitination. Functionally, E4 ubiquitin chain-elongation enzyme specifically involved in polyubiquitin chain assembly. Binds to cdc48 and elongates mono- and diubiquitinated ERAD substrates presented by the ufd1-npl4-cdc48 (UNC) AAA ATPase complex to a chain length of 4 to 6 ubiquitin moieties. Delivers these polyubiquitinated substrates to downstream ERAD components, which target them to the proteasome. Enhances ubiquitination at 'Lys-48', but not at 'Lys-29' of the Ub moiety. The chain is Ubiquitin conjugation factor E4 (ufd2) from Schizosaccharomyces pombe (strain 972 / ATCC 24843) (Fission yeast).